The primary structure comprises 210 residues: Large ribosomal subunit protein uL3 (210 aa).

It belongs to the universal ribosomal protein uL3 family. As to quaternary structure, part of the 50S ribosomal subunit. Forms a cluster with proteins L14 and L19.

Functionally, one of the primary rRNA binding proteins, it binds directly near the 3'-end of the 23S rRNA, where it nucleates assembly of the 50S subunit. The sequence is that of Large ribosomal subunit protein uL3 from Solibacter usitatus (strain Ellin6076).